The primary structure comprises 514 residues: Peptide chain release factor 3 (514 aa).

One can recognise a tr-type G domain in the interval lysine 8 to histidine 268. Residues serine 17–threonine 24, aspartate 85–histidine 89, and asparagine 139–aspartate 142 each bind GTP.

Belongs to the TRAFAC class translation factor GTPase superfamily. Classic translation factor GTPase family. PrfC subfamily.

The protein resides in the cytoplasm. Its function is as follows. Increases the formation of ribosomal termination complexes and stimulates activities of RF-1 and RF-2. It binds guanine nucleotides and has strong preference for UGA stop codons. It may interact directly with the ribosome. The stimulation of RF-1 and RF-2 is significantly reduced by GTP and GDP, but not by GMP. The polypeptide is Peptide chain release factor 3 (Streptococcus pneumoniae serotype 2 (strain D39 / NCTC 7466)).